Here is a 353-residue protein sequence, read N- to C-terminus: Putrescine N-methyltransferase 2 (353 aa).

A disordered region spans residues 15 to 50; that stretch reads KSGAIPMNGHHNGTSKHQNGHKNGTSEQQNGTISLD. The span at 25 to 50 shows a compositional bias: polar residues; that stretch reads HNGTSKHQNGHKNGTSEQQNGTISLD. Residues 64 to 301 form the PABS domain; sequence PGWFSEFSAL…GVIGYMLCST (238 aa). S-adenosyl-L-methionine contacts are provided by residues Gln95, Glu170, and 201–202; that span reads DG. Catalysis depends on Asp220, which acts as the Proton acceptor. Residue Tyr289 coordinates S-adenosyl-L-methionine.

It belongs to the class I-like SAM-binding methyltransferase superfamily. Putrescine methyltransferase family. Predominantly expressed in roots.

The enzyme catalyses putrescine + S-adenosyl-L-methionine = N-methylputrescine + S-adenosyl-L-homocysteine + H(+). Its pathway is alkaloid biosynthesis; nicotine biosynthesis. Its function is as follows. Involved in the biosynthesis of pyridine alkaloid natural products, leading mainly to the production of anabasine, anatabine, nicotine and nornicotine, effective deterrents against herbivores with antiparasitic and pesticide properties (neurotoxins); nornicotine serves as the precursor in the synthesis of the carcinogen compound N'-nitrosonornicotine (NNN). Methyltransferase that mediates the conversion of putrescine to N-methylputrescine. Promotes leaves ripening. This Nicotiana tabacum (Common tobacco) protein is Putrescine N-methyltransferase 2.